The primary structure comprises 509 residues: 2-isopropylmalate synthase (509 aa).

The region spanning Ile5–Lys267 is the Pyruvate carboxyltransferase domain. Asp14, His202, His204, and Asn238 together coordinate Mn(2+). A regulatory domain region spans residues Lys391 to Asn509.

It belongs to the alpha-IPM synthase/homocitrate synthase family. LeuA type 1 subfamily. In terms of assembly, homodimer. The cofactor is Mn(2+).

The protein localises to the cytoplasm. It catalyses the reaction 3-methyl-2-oxobutanoate + acetyl-CoA + H2O = (2S)-2-isopropylmalate + CoA + H(+). It participates in amino-acid biosynthesis; L-leucine biosynthesis; L-leucine from 3-methyl-2-oxobutanoate: step 1/4. Its function is as follows. Catalyzes the condensation of the acetyl group of acetyl-CoA with 3-methyl-2-oxobutanoate (2-ketoisovalerate) to form 3-carboxy-3-hydroxy-4-methylpentanoate (2-isopropylmalate). This Staphylococcus aureus (strain bovine RF122 / ET3-1) protein is 2-isopropylmalate synthase.